Reading from the N-terminus, the 124-residue chain is Ragulator complex protein LAMTOR3 (124 aa).

The tract at residues 57–70 (TDQGSKLGLSKNKS) is required for interaction with LAMTOR2.

It belongs to the LAMTOR3 family. In terms of assembly, part of the Ragulator complex composed of LAMTOR1, LAMTOR2, LAMTOR3, LAMTOR4 and LAMTOR5. LAMTOR4 and LAMTOR5 form a heterodimer that interacts, through LAMTOR1, with a LAMTOR2, LAMTOR3 heterodimer. The Ragulator complex interacts with both the mTORC1 complex and heterodimers constituted of the Rag GTPases RagA/RRAGA, RagB/RRAGB, RagC/RRAGC and RagD/RRAGD; regulated by amino acid availability. The Ragulator complex interacts with SLC38A9; the probable amino acid sensor. Interacts with LAMTOR1 and LAMTOR2; the interaction is direct. Component of the lysosomal folliculin complex (LFC), composed of FLCN, FNIP1 (or FNIP2), RagA/RRAGA or RagB/RRAGB GDP-bound, RagC/RRAGC or RagD/RRAGD GTP-bound, and Ragulator. Interacts with MAP2K1/MEK1 and MAPK2. Interacts with MORG1.

It localises to the late endosome membrane. As part of the Ragulator complex it is involved in amino acid sensing and activation of mTORC1, a signaling complex promoting cell growth in response to growth factors, energy levels, and amino acids. Activated by amino acids through a mechanism involving the lysosomal V-ATPase, the Ragulator plays a dual role for the small GTPases Rag (RagA/RRAGA, RagB/RRAGB, RagC/RRAGC and/or RagD/RRAGD): it (1) acts as a guanine nucleotide exchange factor (GEF), activating the small GTPases Rag and (2) mediates recruitment of Rag GTPases to the lysosome membrane. Activated Ragulator and Rag GTPases function as a scaffold recruiting mTORC1 to lysosomes where it is in turn activated. Adapter protein that enhances the efficiency of the MAP kinase cascade facilitating the activation of MAPK2. The chain is Ragulator complex protein LAMTOR3 (Lamtor3) from Mus musculus (Mouse).